Consider the following 200-residue polypeptide: Recombination protein RecR (200 aa).

The segment at 57–72 (CNECRTFTEEDVCHIC) adopts a C4-type zinc-finger fold. Positions 81 to 176 (GLLCVVESPA…DASRIAHGVP (96 aa)) constitute a Toprim domain.

The protein belongs to the RecR family.

In terms of biological role, may play a role in DNA repair. It seems to be involved in an RecBC-independent recombinational process of DNA repair. It may act with RecF and RecO. This Vibrio vulnificus (strain CMCP6) protein is Recombination protein RecR.